The following is a 450-amino-acid chain: Homogentisate 1,2-dioxygenase (450 aa).

H304 functions as the Proton acceptor in the catalytic mechanism. Residues H347 and E353 each coordinate Fe cation. Residues Y362 and H383 each contribute to the homogentisate site. H383 lines the Fe cation pocket.

This sequence belongs to the homogentisate dioxygenase family. Hexamer; dimer of trimers. It depends on Fe cation as a cofactor.

The enzyme catalyses homogentisate + O2 = 4-maleylacetoacetate + H(+). Its pathway is amino-acid degradation; L-phenylalanine degradation; acetoacetate and fumarate from L-phenylalanine: step 4/6. Involved in the catabolism of homogentisate (2,5-dihydroxyphenylacetate or 2,5-OH-PhAc), a central intermediate in the degradation of phenylalanine and tyrosine. Catalyzes the oxidative ring cleavage of the aromatic ring of homogentisate to yield maleylacetoacetate. The polypeptide is Homogentisate 1,2-dioxygenase (Burkholderia thailandensis (strain ATCC 700388 / DSM 13276 / CCUG 48851 / CIP 106301 / E264)).